The following is a 526-amino-acid chain: Osmo-independent choline transporter BetT1 (526 aa).

Topologically, residues 1–17 (MWSKRDEQKTYPPIRLN) are cytoplasmic. Residues 18–38 (PFVFWSSAISISIFGMLFVLF) traverse the membrane as a helical segment. The Periplasmic portion of the chain corresponds to 39–56 (PETSQHGLTWIQQQVNQL). Residues 57–77 (FGWYYMLVIILSLGFVAWLAF) form a helical membrane-spanning segment. At 78–93 (SQVGNIPLGKAQDKPE) the chain is on the cytoplasmic side. A helical transmembrane segment spans residues 94 to 114 (FGYLVWTSMLFSAGIGIALLY). The Periplasmic segment spans residues 115–148 (YGVAEPVDHFLRPPEGQGGTVEAAQNAMMYSFLH). A helical membrane pass occupies residues 149–169 (WGIHGWVLYALVGVTLGYFAF). The Cytoplasmic portion of the chain corresponds to 170–200 (RRDLPLALRSALYPIFGERIHGLVGHMVDGF). The helical transmembrane segment at 201–221 (GILATIISLVTNLGIGALVMI) threads the bilayer. At 222 to 236 (SGISYLFPDLPNTSS) the chain is on the periplasmic side. A helical transmembrane segment spans residues 237 to 257 (TLVVTVIMMMLVATLTTVIGI). Topologically, residues 258–272 (EKGLAWLSRINLRLL) are cytoplasmic. The helical transmembrane segment at 273 to 293 (YLLLLFVFLTGPTNHLLNGLV) threads the bilayer. The Periplasmic segment spans residues 294 to 323 (QNTGDYLSHFVQKSFDLYLYDKNATGWLAS). A helical transmembrane segment spans residues 324–344 (WTIFYWAWWIAWAPFVGMFIA). Residues 345–354 (RISKGRTIRE) are Cytoplasmic-facing. Residues 355-375 (VVLGVCLIPLGFTLAWISIFG) traverse the membrane as a helical segment. Residues 376 to 417 (NTAIDLILNHGQQIIGSLVIQDPALSLFKLLEYLPFHPYVAG) lie on the Periplasmic side of the membrane. Residues 418 to 438 (IVVVICFVLFLTPVGSGTLMI) form a helical membrane-spanning segment. Residues 439–457 (ANLSSQGGSSDSDSPIWLR) are Cytoplasmic-facing. The helical transmembrane segment at 458-478 (VFWSIAITIVSIGLLLAGSFS) threads the bilayer. At 479–482 (AMQS) the chain is on the periplasmic side. Residues 483–503 (AVVLCGLPFSVILLLYMFGLA) form a helical membrane-spanning segment. The Cytoplasmic segment spans residues 504–526 (KALKQETQQPVVESHTTETSGSD).

The protein belongs to the BCCT transporter (TC 2.A.15) family.

It localises to the cell inner membrane. Sodium-independent high-affinity choline uptake system. Uptake is not proton coupled. May play a role in metabolic adaptation to choline-containing environments. The polypeptide is Osmo-independent choline transporter BetT1 (Acinetobacter baylyi (strain ATCC 33305 / BD413 / ADP1)).